A 253-amino-acid polypeptide reads, in one-letter code: Imidazole glycerol phosphate synthase subunit HisF (253 aa).

Residues Asp11 and Asp130 contribute to the active site.

It belongs to the HisA/HisF family. Heterodimer of HisH and HisF.

Its subcellular location is the cytoplasm. It carries out the reaction 5-[(5-phospho-1-deoxy-D-ribulos-1-ylimino)methylamino]-1-(5-phospho-beta-D-ribosyl)imidazole-4-carboxamide + L-glutamine = D-erythro-1-(imidazol-4-yl)glycerol 3-phosphate + 5-amino-1-(5-phospho-beta-D-ribosyl)imidazole-4-carboxamide + L-glutamate + H(+). It participates in amino-acid biosynthesis; L-histidine biosynthesis; L-histidine from 5-phospho-alpha-D-ribose 1-diphosphate: step 5/9. Its function is as follows. IGPS catalyzes the conversion of PRFAR and glutamine to IGP, AICAR and glutamate. The HisF subunit catalyzes the cyclization activity that produces IGP and AICAR from PRFAR using the ammonia provided by the HisH subunit. The protein is Imidazole glycerol phosphate synthase subunit HisF of Dehalococcoides mccartyi (strain ATCC BAA-2266 / KCTC 15142 / 195) (Dehalococcoides ethenogenes (strain 195)).